The sequence spans 178 residues: NAD(P)H-quinone oxidoreductase subunit 6, chloroplastic (178 aa).

Transmembrane regions (helical) follow at residues 10–30, 33–53, 64–84, 100–120, and 148–168; these read LIVA…VIFF, IVYA…LYLF, ILIY…LISL, ISAF…LQTP, and LLPF…AVSI.

This sequence belongs to the complex I subunit 6 family. As to quaternary structure, NDH is composed of at least 16 different subunits, 5 of which are encoded in the nucleus.

It localises to the plastid. Its subcellular location is the chloroplast thylakoid membrane. It carries out the reaction a plastoquinone + NADH + (n+1) H(+)(in) = a plastoquinol + NAD(+) + n H(+)(out). The enzyme catalyses a plastoquinone + NADPH + (n+1) H(+)(in) = a plastoquinol + NADP(+) + n H(+)(out). NDH shuttles electrons from NAD(P)H:plastoquinone, via FMN and iron-sulfur (Fe-S) centers, to quinones in the photosynthetic chain and possibly in a chloroplast respiratory chain. The immediate electron acceptor for the enzyme in this species is believed to be plastoquinone. Couples the redox reaction to proton translocation, and thus conserves the redox energy in a proton gradient. This Chara vulgaris (Common stonewort) protein is NAD(P)H-quinone oxidoreductase subunit 6, chloroplastic (ndhG).